A 249-amino-acid chain; its full sequence is Glucosamine-6-phosphate deaminase 2 (249 aa).

Residue Asp-67 is the Proton acceptor; for enolization step of the active site. The active-site For ring-opening step is Asn-136. The active-site Proton acceptor; for ring-opening step is His-138. The active-site For ring-opening step is the Glu-143.

Belongs to the glucosamine/galactosamine-6-phosphate isomerase family. NagB subfamily.

The enzyme catalyses alpha-D-glucosamine 6-phosphate + H2O = beta-D-fructose 6-phosphate + NH4(+). It participates in amino-sugar metabolism; N-acetylneuraminate degradation; D-fructose 6-phosphate from N-acetylneuraminate: step 5/5. Catalyzes the reversible isomerization-deamination of glucosamine 6-phosphate (GlcN6P) to form fructose 6-phosphate (Fru6P) and ammonium ion. Required for growth on glucosamine and also provides the majority of GlcN6P deaminase activity during growth on N-acetylglucosamine (GlcNAc). This Bacillus subtilis (strain 168) protein is Glucosamine-6-phosphate deaminase 2.